The following is a 268-amino-acid chain: Receptor expression-enhancing protein 2 (268 aa).

Transmembrane regions (helical) follow at residues 1-21 and 35-55; these read MVSW…YPAY and YVKW…ETIT. A disordered region spans residues 170-268; that stretch reads GDDTHTAATL…TTANNVAESP (99 aa). The segment covering 180–196 has biased composition (low complexity); that stretch reads PRAKTATRTVRATPVPA. Over residues 199–216 the composition is skewed to basic and acidic residues; the sequence is ESQHSSRSDDQSDSRTEH. The span at 228–248 shows a compositional bias: low complexity; it reads RIAITRAAKKPAAAKTEQTTK. A compositionally biased stretch (basic residues) spans 249 to 258; that stretch reads TVKKAPKKKP.

Belongs to the DP1 family. In terms of assembly, interacts with odorant receptor proteins.

It is found in the membrane. Functionally, may enhance the cell surface expression of odorant receptors. The protein is Receptor expression-enhancing protein 2 (reep2) of Danio rerio (Zebrafish).